The sequence spans 1252 residues: Guanine nucleotide exchange factor SDC25 (1252 aa).

An SH3 domain is found at 26-97 (QPIDVVECTY…PPSFTRSILN (72 aa)). Disordered stretches follow at residues 409-454 (IPAS…DTIW) and 623-648 (LNLD…DEYE). Positions 416 to 428 (TSCSSETSHHSPS) are enriched in low complexity. The N-terminal Ras-GEF domain occupies 782 to 914 (SNNRIKGGSK…LLKEVNQKFK (133 aa)). In terms of domain architecture, Ras-GEF spans 952-1199 (DPVLFATQLT…YQLSLIIEPK (248 aa)). Residues 1201 to 1252 (RKKVVPNSNSNNKSQEKSRDDQTDEGKTSTKKDRFSKFQLHKTKKKAPKVSK) form a disordered region. Positions 1214 to 1236 (SQEKSRDDQTDEGKTSTKKDRFS) are enriched in basic and acidic residues. A compositionally biased stretch (basic residues) spans 1239–1252 (QLHKTKKKAPKVSK).

In terms of biological role, promotes the exchange of Ras-bound GDP by GTP. This Saccharomyces cerevisiae (strain YJM789) (Baker's yeast) protein is Guanine nucleotide exchange factor SDC25 (SDC25).